Here is a 324-residue protein sequence, read N- to C-terminus: MIALGIEGTAHTLGIGIVTENKVLANVFDTLKTEKGGIHPKEAAEHHAKLLKPLLRKALEEAGVSMEDIDVIAFSQGPGLGPALRVVATAARALAIKYNKPIVGVNHCIAHVEITKMFGVKDPVGLYVSGGNTQVLALEGGRYRVFGETLDIGIGNALDVFARELGLGFPGGPKIEKLALKGEKYIELPYAVKGMDLSFSGLLTEAIRKYKSGKYRVEDLAYSFQETAFAALVEVTERALAHTEKEEVVLVGGVAANNRLREMLRIMAEDRGVKFFVPPYDLCRDNGAMIAYTGLRMYKAGIKFKLEETIVKQKFRTDEVEVVW.

H107, H111, and Y127 together coordinate Fe cation. Substrate contacts are provided by residues 127–131 (YVSGG), D159, G172, E176, and N257. Residue D285 participates in Fe cation binding.

It belongs to the KAE1 / TsaD family. In terms of assembly, monomer. Component of the KEOPS complex that consists of Kae1, Bud32, Cgi121 and Pcc1; the whole complex dimerizes. Fe(2+) serves as cofactor.

It is found in the cytoplasm. The enzyme catalyses L-threonylcarbamoyladenylate + adenosine(37) in tRNA = N(6)-L-threonylcarbamoyladenosine(37) in tRNA + AMP + H(+). Functionally, required for the formation of a threonylcarbamoyl group on adenosine at position 37 (t(6)A37) in tRNAs that read codons beginning with adenine. Is a component of the KEOPS complex that is probably involved in the transfer of the threonylcarbamoyl moiety of threonylcarbamoyl-AMP (TC-AMP) to the N6 group of A37. Kae1 likely plays a direct catalytic role in this reaction, but requires other protein(s) of the complex to fulfill this activity. This Pyrococcus furiosus (strain ATCC 43587 / DSM 3638 / JCM 8422 / Vc1) protein is tRNA N6-adenosine threonylcarbamoyltransferase.